A 67-amino-acid chain; its full sequence is Prokaryotic ubiquitin-like protein Pup (67 aa).

Residues 1-11 are compositionally biased toward low complexity; the sequence is MAGQEQQQPQS. The tract at residues 1-47 is disordered; it reads MAGQEQQQPQSRESEFEDDAPATPPAPGEAQASAATQGVDDLLDEID. The interval 25–61 is ARC ATPase binding; sequence PAPGEAQASAATQGVDDLLDEIDGVLESNAEEFVRAF. Gln-67 is modified (deamidated glutamine). Gln-67 participates in a covalent cross-link: Isoglutamyl lysine isopeptide (Gln-Lys) (interchain with K-? in acceptor proteins).

This sequence belongs to the prokaryotic ubiquitin-like protein family. Strongly interacts with the proteasome-associated ATPase ARC through a hydrophobic interface; the interacting region of Pup lies in its C-terminal half. There is one Pup binding site per ARC hexamer ring. Is modified by deamidation of its C-terminal glutamine to glutamate by the deamidase Dop, a prerequisite to the subsequent pupylation process.

Its pathway is protein degradation; proteasomal Pup-dependent pathway. Functionally, protein modifier that is covalently attached to lysine residues of substrate proteins, thereby targeting them for proteasomal degradation. The tagging system is termed pupylation. This is Prokaryotic ubiquitin-like protein Pup from Arthrobacter sp. (strain FB24).